Here is a 235-residue protein sequence, read N- to C-terminus: Exotoxin type C (235 aa).

Positions 1–27 (MKKINIIKIVFIITVILISTISPIIKS) are cleaved as a signal peptide. His194, His228, and Asp230 together coordinate Zn(2+).

The protein belongs to the staphylococcal/streptococcal toxin family.

Superantigen that acts as a causative agent of the symptoms associated with scarlet fever. Has been associated with streptococcal toxic shock-like disease and may play a role in the early events of rheumatic fever. Superantigens cross-link major histocompatibility complex (MHC) class II and T-cell receptor (TCR) molecules, resulting in an overstimulation of T-cells associated with a massive release of pyrogenic and inflammatory cytokines. The chain is Exotoxin type C from Streptococcus pyogenes serotype M18 (strain MGAS8232).